The chain runs to 140 residues: Organic hydroperoxide resistance protein-like 1 (140 aa).

Belongs to the OsmC/Ohr family.

The chain is Organic hydroperoxide resistance protein-like 1 from Staphylococcus epidermidis (strain ATCC 35984 / DSM 28319 / BCRC 17069 / CCUG 31568 / BM 3577 / RP62A).